The primary structure comprises 337 residues: MKALQTLMSGESLTQDQTREFFQRLIKGELNDIQVSAALIAMKMRGETPAELAGAAEAILSAAKPFLRSDTTVIDSCGTGGDGSNTINISTTAALVAASMGLAVAKHGNRSVSSRSGSADVLEALKLRVNLDPSDASTQLADNGFCFLFAPHYHPGIKHAMPVRQTLKTRTLFNLIGPLVNPARPDAQLLGVYSEEWVRPMAETLQRLGVKRAMVVHGSGLDELALHGPTRVIELRNGELNDYHVTPNDFGVPSAPLDELKGGDADFNARILEDILAGGGSPAQRHSVAMNVAALLYLSGQYNDMKAATAATMEHLDTGQPLLHLRRVQDAQETYHV.

Residues glycine 78, 81–82, threonine 86, 88–91, 106–114, and serine 118 each bind 5-phospho-alpha-D-ribose 1-diphosphate; these read GD, NIST, and KHGNRSVSS. Glycine 78 is a binding site for anthranilate. Serine 90 contributes to the Mg(2+) binding site. Asparagine 109 is an anthranilate binding site. Anthranilate is bound at residue arginine 164. Mg(2+)-binding residues include aspartate 222 and glutamate 223.

It belongs to the anthranilate phosphoribosyltransferase family. Homodimer. The cofactor is Mg(2+).

The catalysed reaction is N-(5-phospho-beta-D-ribosyl)anthranilate + diphosphate = 5-phospho-alpha-D-ribose 1-diphosphate + anthranilate. The protein operates within amino-acid biosynthesis; L-tryptophan biosynthesis; L-tryptophan from chorismate: step 2/5. Functionally, catalyzes the transfer of the phosphoribosyl group of 5-phosphorylribose-1-pyrophosphate (PRPP) to anthranilate to yield N-(5'-phosphoribosyl)-anthranilate (PRA). The sequence is that of Anthranilate phosphoribosyltransferase from Idiomarina loihiensis (strain ATCC BAA-735 / DSM 15497 / L2-TR).